Reading from the N-terminus, the 296-residue chain is MASKTKFRGSYTALVTPFKNGSVDEAAFRSLVSWQIGEGVHGLVPVGTTGESPTLSHDEHRKVVEWCIDEARGRVPVIAGAGSNSTREAVDLAVHAEKAGADAVLVVTPYYNKPTQEGMYHHFKTVNDAIGIPIIIYNIPSRSVVDLSVETMARLFELKNIAGVKDATANVARVSLQRHAMGPDFIQLSGEDMTALAFMAAGGHGCVSVVANVAPKLCASLMSAVLKGDYATGLAIQDRLVPLHAAIFKEPGLAGAKHGLKLLGRLDEVVRLPLLPVTPPTGKVIRDAMVHAGLLN.

Residue Thr49 coordinates pyruvate. The active-site Proton donor/acceptor is the Tyr137. Residue Lys165 is the Schiff-base intermediate with substrate of the active site. Pyruvate is bound at residue Val207.

The protein belongs to the DapA family. As to quaternary structure, homotetramer; dimer of dimers.

It is found in the cytoplasm. It carries out the reaction L-aspartate 4-semialdehyde + pyruvate = (2S,4S)-4-hydroxy-2,3,4,5-tetrahydrodipicolinate + H2O + H(+). The protein operates within amino-acid biosynthesis; L-lysine biosynthesis via DAP pathway; (S)-tetrahydrodipicolinate from L-aspartate: step 3/4. Catalyzes the condensation of (S)-aspartate-beta-semialdehyde [(S)-ASA] and pyruvate to 4-hydroxy-tetrahydrodipicolinate (HTPA). The protein is 4-hydroxy-tetrahydrodipicolinate synthase of Nitrobacter hamburgensis (strain DSM 10229 / NCIMB 13809 / X14).